A 344-amino-acid polypeptide reads, in one-letter code: Probable dual-specificity RNA methyltransferase RlmN (344 aa).

Glu-90 (proton acceptor) is an active-site residue. The Radical SAM core domain maps to 96–326 (YKYGNAICIS…VTIRRELGSS (231 aa)). A disulfide bond links Cys-103 and Cys-331. Residues Cys-110, Cys-114, and Cys-117 each contribute to the [4Fe-4S] cluster site. Residues 157–158 (GE), Ser-189, 212–214 (SLH), and Asn-288 contribute to the S-adenosyl-L-methionine site. Cys-331 serves as the catalytic S-methylcysteine intermediate.

It belongs to the radical SAM superfamily. RlmN family. [4Fe-4S] cluster serves as cofactor.

Its subcellular location is the cytoplasm. It catalyses the reaction adenosine(2503) in 23S rRNA + 2 reduced [2Fe-2S]-[ferredoxin] + 2 S-adenosyl-L-methionine = 2-methyladenosine(2503) in 23S rRNA + 5'-deoxyadenosine + L-methionine + 2 oxidized [2Fe-2S]-[ferredoxin] + S-adenosyl-L-homocysteine. The catalysed reaction is adenosine(37) in tRNA + 2 reduced [2Fe-2S]-[ferredoxin] + 2 S-adenosyl-L-methionine = 2-methyladenosine(37) in tRNA + 5'-deoxyadenosine + L-methionine + 2 oxidized [2Fe-2S]-[ferredoxin] + S-adenosyl-L-homocysteine. Specifically methylates position 2 of adenine 2503 in 23S rRNA and position 2 of adenine 37 in tRNAs. In Caldicellulosiruptor saccharolyticus (strain ATCC 43494 / DSM 8903 / Tp8T 6331), this protein is Probable dual-specificity RNA methyltransferase RlmN.